Here is a 388-residue protein sequence, read N- to C-terminus: MENVVIIDGIRTPMGRSKGGAFRQVRAEDLSAHLMKKLFKRNPAIQQHEIDDIYWGCVQQTLEQGFNIARNAALLADIPHSVPAVTVNRLCGSSMQALHDGARMIMTGEANVTLIGGVEHMGHVPMTHGVDFHPKMSLSVAKAAGVMGLTAEMLAKIHHISREMQDEFALRSHQRATQATQSGAFANEISPIYGHDADGILKRFDYDEVIRSDANLKDLAALRPVFDPVTGSVTAGSSSALSDGASAMLITSESYAKNLGLKPRARIRSMAAVGCDPSIMGYGPVPATQMALKKAGLVLGDIGVIELNEAFAAQSLACLKGLNLLDSMDDKVNLNGGAIALGHPLGCSGARITTTLLNLMERRDVQFGLATMCIGLGQGIATIIERMD.

Cys-91 functions as the Acyl-thioester intermediate in the catalytic mechanism. Catalysis depends on proton acceptor residues His-343 and Cys-373.

Belongs to the thiolase-like superfamily. Thiolase family. In terms of assembly, heterotetramer of two alpha chains (FadB) and two beta chains (FadA).

It is found in the cytoplasm. It carries out the reaction an acyl-CoA + acetyl-CoA = a 3-oxoacyl-CoA + CoA. The protein operates within lipid metabolism; fatty acid beta-oxidation. Catalyzes the final step of fatty acid oxidation in which acetyl-CoA is released and the CoA ester of a fatty acid two carbons shorter is formed. The sequence is that of 3-ketoacyl-CoA thiolase from Photorhabdus laumondii subsp. laumondii (strain DSM 15139 / CIP 105565 / TT01) (Photorhabdus luminescens subsp. laumondii).